The primary structure comprises 1477 residues: Lysine-specific demethylase rbr-2 (1477 aa).

A disordered region spans residues 1 to 37 (MRARRQENSISTPSAPSTSTSPRKKASIGNSRSKNHG). The segment covering 9-21 (SISTPSAPSTSTS) has biased composition (low complexity). The JmjN domain maps to 56–97 (APIYYPTEEEFSDPIEYVAKIRHEAEKFGVVKIVPPANFKPP). The ARID domain maps to 121 to 218 (VKEKHTFIDR…HIEPFNRNLK (98 aa)). The disordered stretch occupies residues 222 to 314 (MKNDDESDDE…KAEGDDDDDE (93 aa)). Residues 246-259 (MRTEIEVPNDKTTE) show a composition bias toward basic and acidic residues. 2 stretches are compositionally biased toward basic residues: residues 272-283 (GRRRSKNKKASS) and 295-304 (NSTRGRKNKK). A PHD-type 1 zinc finger spans residues 319 to 371 (QVFCVACNEGKDEDLLLLCDIDGCNNGRHTYCCDPVLDEVPEGEWRCPKCIES). Residues 468–634 (QYASHAWNLN…KGRECVESYS (167 aa)) enclose the JmjC domain. Fe cation-binding residues include His-514, Asp-517, and His-602. The stretch at 874–926 (IIDKLEKWMEQVEMWRNRAKDAIYREQEYSKEEIEKIIEEGDEYDIKLEEIDE) forms a coiled coil. Residues 1203-1257 (LEACSCLGFNKSDDSESTLTCIMCDSEFHVRCCEWSPFLEKLPEGCFLCVRCLRG) form a PHD-type 2 zinc finger. The disordered stretch occupies residues 1375–1404 (TAKRKRPSVSHKETSKKSRKRQSQASPSEY). The segment at 1411 to 1466 (FKSCQARACLKPYGDSVNWVMCEAGCKNWFHVICLGFTLREINDMHEYRCSSCLDH) adopts a PHD-type 3 zinc-finger fold.

The protein belongs to the JARID1 histone demethylase family. Fe(2+) serves as cofactor.

The protein localises to the nucleus. The catalysed reaction is N(6),N(6),N(6)-trimethyl-L-lysyl(4)-[histone H3] + 3 2-oxoglutarate + 3 O2 = L-lysyl(4)-[histone H3] + 3 formaldehyde + 3 succinate + 3 CO2. In terms of biological role, histone demethylase that specifically demethylates 'Lys-4' of histone H3, thereby playing a central role in histone code. Does not demethylate histone H3 'Lys-9', H3 'Lys-27', H3 'Lys-36', H3 'Lys-79' or H4 'Lys-20'. Demethylates trimethylated and dimethylated but not monomethylated H3 'Lys-4'. Required for normal longevity of the soma in a germline-dependent manner. Implicated in the epigenetic inheritance of lifespan over several generations. Involved in larval development and vulva formation. The sequence is that of Lysine-specific demethylase rbr-2 (rbr-2) from Caenorhabditis elegans.